We begin with the raw amino-acid sequence, 707 residues long: Dendrin (707 aa).

Disordered stretches follow at residues 1-22 (MLDG…DEES), 67-86 (QNRT…RRPW), 94-195 (ATNW…PWGG), 213-273 (AGTA…KKRL), and 342-377 (TEVA…GSEE). Residues 103 to 134 (AEVRAREQEKRKAASQEREAKETERKRRKAGG) adopt a coiled-coil conformation. The segment covering 105–127 (VRAREQEKRKAASQEREAKETER) has biased composition (basic and acidic residues). The segment at 113–131 (RKAASQEREAKETERKRRK) is nuclear localization. Residues 186-236 (GVAWAGPWGGRRPGPPSYEAHLLLRGAAGTAPRRRWDRPPPYVAPPSYEGP) form an interaction with MAGI2 region. The tract at residues 340–434 (PVTEVALSGS…LEVWKVTRRA (95 aa)) is interaction with ACTN1. The segment covering 359-369 (PRSRQHLRGSR) has biased composition (basic residues). The residue at position 387 (Ser387) is a Phosphoserine. Disordered regions lie at residues 389-421 (KKPP…EGTE) and 517-707 (RVLN…GKRE). The segment at 406 to 707 (GGTGWKESLG…TRKTPQGKRE (302 aa)) is interaction with CD2AP and NPHS1. 2 stretches are compositionally biased toward basic and acidic residues: residues 524-544 (EGRE…EERS) and 692-707 (GLVR…GKRE).

As to quaternary structure, forms a ternary complex with MAGI2 and SH3KBP1; recruits DDN to the cytoplasm. Interacts with MAGI1. Interacts with ACTN1 and may interact with WWC1. Interacts with the podocyte slit diaphragm proteins CD2AP, NPHS1 and NPHS2; the interaction with CD2AP and NPHS1 is direct. In terms of tissue distribution, specifically expressed in forebrain structures, particularly in neocortex, olfactory bulb, hippocampus, caudate-putamen, and limbic system (at protein level). Also detected in spleen, liver, kidney and placenta (at protein level).

It is found in the cell projection. The protein localises to the dendritic spine membrane. Its subcellular location is the cytoplasm. It localises to the endoplasmic reticulum membrane. The protein resides in the perikaryon. It is found in the nucleus. Functionally, promotes apoptosis of kidney glomerular podocytes. Podocytes are highly specialized cells essential to the ultrafiltration of blood, resulting in the extraction of urine and the retention of protein. In Rattus norvegicus (Rat), this protein is Dendrin (Ddn).